Consider the following 101-residue polypeptide: Large ribosomal subunit protein uL24 (101 aa).

The protein belongs to the universal ribosomal protein uL24 family. In terms of assembly, part of the 50S ribosomal subunit.

Its function is as follows. One of two assembly initiator proteins, it binds directly to the 5'-end of the 23S rRNA, where it nucleates assembly of the 50S subunit. Functionally, one of the proteins that surrounds the polypeptide exit tunnel on the outside of the subunit. This chain is Large ribosomal subunit protein uL24, found in Ruegeria sp. (strain TM1040) (Silicibacter sp.).